The primary structure comprises 538 residues: Putative outer membrane porin BglH (538 aa).

Positions 1-25 are cleaved as a signal peptide; the sequence is MFRRNIITSAILLMAPLAFSAQSLA.

The protein belongs to the porin LamB (TC 1.B.3) family.

It is found in the cell outer membrane. Its function is as follows. May be a sugar porin with a broad carbohydrate specificity. In Escherichia coli O6:K15:H31 (strain 536 / UPEC), this protein is Putative outer membrane porin BglH (bglH).